The chain runs to 46 residues: Iota-conotoxin-like r11b (46 aa).

4-hydroxyproline occurs at positions 2 and 11. Intrachain disulfides connect C5-C19, C12-C22, C18-C27, and C21-C38. P29 carries the 4-hydroxyproline modification. Residue F44 is modified to D-phenylalanine.

Post-translationally, the natural D-Phe form of the peptide is more potent than the synthetic L-Phe form. In terms of tissue distribution, expressed by the venom duct.

Its subcellular location is the secreted. Iota-conotoxins bind to voltage-gated sodium channels (Nav) and act as agonists by shifting the voltage-dependence of activation to more hyperpolarized levels. Produces excitatory symptoms when injected intracranially into mice and is lethal at higher doses. Exposure to frog cutaneous pectoris induces spontaneous and repetitive action potentials. This effect is slowly reversible. Natural peptide (with D-Phe) is active on nerve, but not on muscle. Synthetic peptide (with L-Phe) is not active on both nerve and muscle. This is Iota-conotoxin-like r11b from Conus radiatus (Rayed cone).